The chain runs to 223 residues: Sigma non-opioid intracellular receptor 1 (223 aa).

Over 1 to 9 the chain is Lumenal; it reads MQWAVGRRW. The targeting to endoplasmic reticulum-associated lipid droplets stretch occupies residues 2-8; it reads QWAVGRR. A helical transmembrane segment spans residues 10 to 30; it reads LWVALFLAAVAVLTQIVWLWL. Topologically, residues 31 to 223 are cytoplasmic; sequence GTQNFVFQRE…LTTYLFGQDP (193 aa). Residues 99–106 form an important for ligand-binding region; the sequence is SLSEYVLL. The segment at 177-223 is C-terminal hydrophobic region; the sequence is VIPSTLGFALADTVFSTQDFLTLFYTLRVYARALQLELTTYLFGQDP.

Belongs to the ERG2 family. As to quaternary structure, homotrimer. Forms a ternary complex with ANK2 and ITPR3. The complex is disrupted by agonists. Interacts with KCNA4. Interacts with KCNA2; cocaine consumption leads to increased interaction. Interacts with RNF112 in an oxidative stress-regulated manner. Ubiquitously expressed with higher expression in liver, kidney and steroid-producing tissues such as placenta, ovary and adrenal gland.

The protein localises to the nucleus inner membrane. The protein resides in the nucleus outer membrane. It localises to the nucleus envelope. It is found in the cytoplasmic vesicle. Its subcellular location is the endoplasmic reticulum membrane. The protein localises to the membrane. The protein resides in the lipid droplet. It localises to the cell junction. It is found in the cell membrane. Its subcellular location is the cell projection. The protein localises to the growth cone. The protein resides in the postsynaptic density membrane. Functionally, functions in lipid transport from the endoplasmic reticulum and is involved in a wide array of cellular functions probably through regulation of the biogenesis of lipid microdomains at the plasma membrane. Involved in the regulation of different receptors it plays a role in BDNF signaling and EGF signaling. Also regulates ion channels like the potassium channel and could modulate neurotransmitter release. Plays a role in calcium signaling through modulation together with ANK2 of the ITP3R-dependent calcium efflux at the endoplasmic reticulum. Plays a role in several other cell functions including proliferation, survival and death. Originally identified for its ability to bind various psychoactive drugs it is involved in learning processes, memory and mood alteration. Necessary for proper mitochondrial axonal transport in motor neurons, in particular the retrograde movement of mitochondria. Plays a role in protecting cells against oxidative stress-induced cell death via its interaction with RNF112. This chain is Sigma non-opioid intracellular receptor 1 (SIGMAR1), found in Cavia porcellus (Guinea pig).